Consider the following 377-residue polypeptide: Succinyl-diaminopimelate desuccinylase (377 aa).

A Zn(2+)-binding site is contributed by H66. The active site involves D68. Position 99 (D99) interacts with Zn(2+). The Proton acceptor role is filled by E133. Residues E134, E163, and H349 each contribute to the Zn(2+) site.

The protein belongs to the peptidase M20A family. DapE subfamily. Homodimer. Zn(2+) serves as cofactor. It depends on Co(2+) as a cofactor.

It catalyses the reaction N-succinyl-(2S,6S)-2,6-diaminopimelate + H2O = (2S,6S)-2,6-diaminopimelate + succinate. It participates in amino-acid biosynthesis; L-lysine biosynthesis via DAP pathway; LL-2,6-diaminopimelate from (S)-tetrahydrodipicolinate (succinylase route): step 3/3. Functionally, catalyzes the hydrolysis of N-succinyl-L,L-diaminopimelic acid (SDAP), forming succinate and LL-2,6-diaminopimelate (DAP), an intermediate involved in the bacterial biosynthesis of lysine and meso-diaminopimelic acid, an essential component of bacterial cell walls. This is Succinyl-diaminopimelate desuccinylase from Legionella pneumophila (strain Lens).